The following is a 227-amino-acid chain: Translation initiation factor 6 (227 aa).

It belongs to the eIF-6 family.

Its function is as follows. Binds to the 50S ribosomal subunit and prevents its association with the 30S ribosomal subunit to form the 70S initiation complex. The polypeptide is Translation initiation factor 6 (Pyrococcus abyssi (strain GE5 / Orsay)).